Here is a 777-residue protein sequence, read N- to C-terminus: Intraflagellar transport protein 80 homolog (777 aa).

WD repeat units lie at residues 12-50 (KHQE…TSLI), 104-143 (AHCG…RSTL), 145-185 (QQGI…LQWK), 186-225 (AHDG…LYGS), 227-265 (PHEH…YALE), 267-306 (PNTG…WEWK), and 504-542 (KLGT…YVDR). The tract at residues 758–777 (TKERDRSSSGQSSKNTGLKP) is disordered. The span at 765-777 (SSGQSSKNTGLKP) shows a compositional bias: polar residues.

Component of the IFT complex B, at least composed of IFT20, IFT22, IFT25, IFT27, IFT46, IFT52, TRAF3IP1/IFT54, IFT57, IFT74, IFT80, IFT81, and IFT88. Interacts with IFT88. Interacts with IFT57 and IFT70B.

The protein resides in the cytoplasm. It is found in the cytoskeleton. The protein localises to the cilium basal body. It localises to the cilium axoneme. Functionally, component of the intraflagellar transport (IFT) complex B, which is essential for the development and maintenance of motile and sensory cilia. This Rattus norvegicus (Rat) protein is Intraflagellar transport protein 80 homolog (Ift80).